A 217-amino-acid chain; its full sequence is TLD domain-containing protein 2 (217 aa).

The disordered stretch occupies residues 1 to 48 (MKSLRWRYTRLPSQVEDALSGEEDKEEEEEKEEETTPAPTPVPEHPMV). The segment covering 19 to 35 (LSGEEDKEEEEEKEEET) has biased composition (acidic residues). The 162-residue stretch at 56 to 217 (QVLGASEMSQ…ISELEAWVLS (162 aa)) folds into the TLDc domain.

The protein belongs to the OXR1 family.

This Bos taurus (Bovine) protein is TLD domain-containing protein 2 (TLDC2).